The chain runs to 502 residues: Glycerol kinase (502 aa).

T14 provides a ligand contact to ADP. T14, T15, and S16 together coordinate ATP. T14 is a binding site for sn-glycerol 3-phosphate. Position 18 (R18) interacts with ADP. Residues R84, E85, Y136, and D246 each contribute to the sn-glycerol 3-phosphate site. Glycerol is bound by residues R84, E85, Y136, D246, and Q247. T268 and G311 together coordinate ADP. T268, G311, Q315, and G412 together coordinate ATP. Residues G412 and N416 each coordinate ADP.

This sequence belongs to the FGGY kinase family. In terms of assembly, homotetramer and homodimer (in equilibrium). Heterodimer with EIIA-Glc. Binds 1 zinc ion per glycerol kinase EIIA-Glc dimer. The zinc ion is important for dimerization.

It carries out the reaction glycerol + ATP = sn-glycerol 3-phosphate + ADP + H(+). It participates in polyol metabolism; glycerol degradation via glycerol kinase pathway; sn-glycerol 3-phosphate from glycerol: step 1/1. Activity of this regulatory enzyme is affected by several metabolites. Allosterically and non-competitively inhibited by fructose 1,6-bisphosphate (FBP) and unphosphorylated phosphocarrier protein EIIA-Glc (III-Glc), an integral component of the bacterial phosphotransferase (PTS) system. Functionally, key enzyme in the regulation of glycerol uptake and metabolism. Catalyzes the phosphorylation of glycerol to yield sn-glycerol 3-phosphate. The sequence is that of Glycerol kinase from Salmonella agona (strain SL483).